A 116-amino-acid polypeptide reads, in one-letter code: U11-theraphotoxin-Hhn1c (116 aa).

Residues methionine 1 to alanine 21 form the signal peptide. A propeptide spanning residues aspartate 22 to arginine 74 is cleaved from the precursor. Residues glutamate 61–aspartate 83 are disordered. Disulfide bonds link cysteine 75–cysteine 90, cysteine 82–cysteine 95, and cysteine 89–cysteine 110.

This sequence belongs to the neurotoxin 14 (magi-1) family. 01 (HNTX-16) subfamily. As to expression, expressed by the venom gland.

The protein localises to the secreted. In terms of biological role, probable ion channel inhibitor. In Cyriopagopus hainanus (Chinese bird spider), this protein is U11-theraphotoxin-Hhn1c.